Here is a 767-residue protein sequence, read N- to C-terminus: MGPLQREGRPALGDANVAPGSSPGGVWHQPQPPKDSAFHPMGWSLPKEKGLILCLWNKFCRWFHRRESWAQSRDEQNLLQQKRIWESPLLLAAKENNVQALIKLLKFEGCEVHQKGAMGETALHIAALYDNLEAAMVLMEAAPELVFEPMTSELYEGQTALHIAVINQNVNLVRALLARGASVSARATGSVFHYRPHNLIYYGEHPLSFAACVGSEEIVRLLIEHGADIRAQDSLGNTVLHILILQPNKTFACQMYNLLLSYDGGDHLKSLELVPNNQGLTPFKLAGVEGNIVMFQHLMQKRKHIQWTYGPLTSTLYDLTEIDSSGDDQSLLELIVTTKKREARQILDQTPVKELVSLKWKRYGRPYFCVLGAIYVLYIICFTMCCVYRPLKPRITNRTNPRDNTLLQQKLLQEAYVTPKDDLRLVGELVSIVGAVIILLVEIPDIFRLGVTRFFGQTILGGPFHVIIVTYAFMVLVTMVMRLTNSDGEVVPMSFALVLGWCNVMYFARGFQMLGPFTIMIQKMIFGDLMRFCWLMAVVILGFASAFYIIFQTEDPDELGHFYDYPMALFSTFELFLTIIDGPANYDVDLPFMYSITYAAFAIIATLLMLNLLIAMMGDTHWRVAHERDELWRAQVVATTVMLERKLPRCLWPRSGICGREYGLGDRWFLRVEDRQDLNRQRIRRYAQAFQQQDDLYSEDLEKDSGEKLEMARPFGAYLSFPTPSVSRSTSRSSTNWDRLRQGALRKDLQGIINRGLEDGEGWEYQI.

A disordered region spans residues 1-33 (MGPLQREGRPALGDANVAPGSSPGGVWHQPQPP). The Cytoplasmic segment spans residues 1-366 (MGPLQREGRP…SLKWKRYGRP (366 aa)). ANK repeat units lie at residues 84 to 114 (IWES…EVHQ), 118 to 147 (MGET…ELVF), and 156 to 185 (EGQT…SVSA). The tract at residues 133–143 (EAAMVLMEAAP) is interaction with calmodulin. Phosphotyrosine; by SRC occurs at positions 201 and 202. ANK repeat units lie at residues 202–231 (YGEH…DIRA), 235–276 (LGNT…LVPN), and 278–307 (QGLT…HIQW). Residues 367–387 (YFCVLGAIYVLYIICFTMCCV) form a helical membrane-spanning segment. Topologically, residues 388 to 424 (YRPLKPRITNRTNPRDNTLLQQKLLQEAYVTPKDDLR) are extracellular. N-linked (GlcNAc...) asparagine glycosylation occurs at Asn397. The helical transmembrane segment at 425 to 447 (LVGELVSIVGAVIILLVEIPDIF) threads the bilayer. Residues 448 to 462 (RLGVTRFFGQTILGG) are Cytoplasmic-facing. The helical transmembrane segment at 463-482 (PFHVIIVTYAFMVLVTMVMR) threads the bilayer. Residues 483-488 (LTNSDG) are Extracellular-facing. The chain crosses the membrane as a helical span at residues 489–508 (EVVPMSFALVLGWCNVMYFA). The Cytoplasmic segment spans residues 509 to 528 (RGFQMLGPFTIMIQKMIFGD). The helical transmembrane segment at 529–551 (LMRFCWLMAVVILGFASAFYIIF) threads the bilayer. Residues 552 to 564 (QTEDPDELGHFYD) lie on the Extracellular side of the membrane. The pore-forming intramembrane region spans 565–584 (YPMALFSTFELFLTIIDGPA). The Selectivity filter signature appears at 580-584 (IDGPA). Asp581 is a binding site for Ca(2+). Topologically, residues 585-595 (NYDVDLPFMYS) are extracellular. The helical transmembrane segment at 596 to 616 (ITYAAFAIIATLLMLNLLIAM) threads the bilayer. Over 617-767 (MGDTHWRVAH…EDGEGWEYQI (151 aa)) the chain is Cytoplasmic. Residues 637-641 (VATTV) are interaction with S100A10. Residues 689–707 (AFQQQDDLYSEDLEKDSGE) are interaction with calmodulin.

This sequence belongs to the transient receptor (TC 1.A.4) family. TrpV subfamily. TRPV6 sub-subfamily. In terms of assembly, homotetramer. Probably also forms heterotetramers with TRPV5. Interacts with TRPV5. Interacts with S100A10 and probably with the ANAX2-S100A10 heterotetramer. The interaction with S100A10 is required for the trafficking to the plasma membrane. Interacts with calmodulin. Interacts with BSPRY. Interacts with TCAF1 and TCAF2. Post-translationally, glycosylated. In terms of processing, phosphorylation at Tyr-201 and Tyr-202 by SRC leads to an increased calcium influx through the channel. Probably dephosphorylated at these sites by PTPN1. Expressed in duodenum, proximal jejunum, cecum, and colon.

The protein localises to the cell membrane. The catalysed reaction is Ca(2+)(in) = Ca(2+)(out). Its function is as follows. Calcium selective cation channel that mediates Ca(2+) uptake in various tissues, including the intestine. Important for normal Ca(2+) ion homeostasis in the body, including bone and skin. The channel is activated by low internal calcium level, probably including intracellular calcium store depletion, and the current exhibits an inward rectification. Inactivation includes both a rapid Ca(2+)-dependent and a slower Ca(2+)-calmodulin-dependent mechanism; the latter may be regulated by phosphorylation. In vitro, is slowly inhibited by Mg(2+) in a voltage-independent manner. Heteromeric assembly with TRPV5 seems to modify channel properties. TRPV5-TRPV6 heteromultimeric concatemers exhibit voltage-dependent gating. This Rattus norvegicus (Rat) protein is Transient receptor potential cation channel subfamily V member 6 (Trpv6).